The following is a 227-amino-acid chain: Thymidine kinase 1 (227 aa).

ATP-binding positions include 15-22 (GPMFSGKT), 47-49 (DTR), and 91-94 (DEGQ). E92 serves as the catalytic Proton acceptor. F122 lines the substrate pocket. Positions 147 and 150 each coordinate Zn(2+). Substrate contacts are provided by residues 166 to 170 (IELIG) and Y175. C179 and C182 together coordinate Zn(2+). A compositionally biased stretch (polar residues) spans 187–196 (QNEGNSTKPS). The tract at residues 187 to 227 (QNEGNSTKPSKTARHSHSQSAPSVAPLAVNINPDDHLNNDY) is disordered.

The protein belongs to the thymidine kinase family. In terms of assembly, interacts with calmodulin in the presence of Ca(2+).

The enzyme catalyses thymidine + ATP = dTMP + ADP + H(+). The sequence is that of Thymidine kinase 1 from Dictyostelium discoideum (Social amoeba).